The primary structure comprises 622 residues: Phosphomethylpyrimidine synthase (622 aa).

Substrate is bound by residues Asn226, Met255, Tyr284, His320, 340–342 (SRG), 381–384 (DGLR), and Glu420. His424 contributes to the Zn(2+) binding site. Tyr447 contributes to the substrate binding site. Position 488 (His488) interacts with Zn(2+). 3 residues coordinate [4Fe-4S] cluster: Cys568, Cys571, and Cys576.

The protein belongs to the ThiC family. As to quaternary structure, homodimer. [4Fe-4S] cluster is required as a cofactor.

The enzyme catalyses 5-amino-1-(5-phospho-beta-D-ribosyl)imidazole + S-adenosyl-L-methionine = 4-amino-2-methyl-5-(phosphooxymethyl)pyrimidine + CO + 5'-deoxyadenosine + formate + L-methionine + 3 H(+). It functions in the pathway cofactor biosynthesis; thiamine diphosphate biosynthesis. Catalyzes the synthesis of the hydroxymethylpyrimidine phosphate (HMP-P) moiety of thiamine from aminoimidazole ribotide (AIR) in a radical S-adenosyl-L-methionine (SAM)-dependent reaction. The chain is Phosphomethylpyrimidine synthase from Ruthia magnifica subsp. Calyptogena magnifica.